The primary structure comprises 132 residues: Large-conductance mechanosensitive channel (132 aa).

Helical transmembrane passes span 10–30 and 76–96; these read FAVK…SAFG and GNFI…FLAI.

The protein belongs to the MscL family. As to quaternary structure, homopentamer.

The protein resides in the cell inner membrane. In terms of biological role, channel that opens in response to stretch forces in the membrane lipid bilayer. May participate in the regulation of osmotic pressure changes within the cell. In Campylobacter hominis (strain ATCC BAA-381 / DSM 21671 / CCUG 45161 / LMG 19568 / NCTC 13146 / CH001A), this protein is Large-conductance mechanosensitive channel.